The primary structure comprises 513 residues: ATP synthase subunit alpha 1 (513 aa).

Position 169-176 (169-176) interacts with ATP; sequence GDRQCGKT.

This sequence belongs to the ATPase alpha/beta chains family. F-type ATPases have 2 components, CF(1) - the catalytic core - and CF(0) - the membrane proton channel. CF(1) has five subunits: alpha(3), beta(3), gamma(1), delta(1), epsilon(1). CF(0) has three main subunits: a(1), b(2) and c(9-12). The alpha and beta chains form an alternating ring which encloses part of the gamma chain. CF(1) is attached to CF(0) by a central stalk formed by the gamma and epsilon chains, while a peripheral stalk is formed by the delta and b chains.

Its subcellular location is the cell inner membrane. The catalysed reaction is ATP + H2O + 4 H(+)(in) = ADP + phosphate + 5 H(+)(out). In terms of biological role, produces ATP from ADP in the presence of a proton gradient across the membrane. The alpha chain is a regulatory subunit. In Burkholderia pseudomallei (strain 1710b), this protein is ATP synthase subunit alpha 1.